Consider the following 471-residue polypeptide: Coagulation factor IX (471 aa).

Positions 1–19 are cleaved as a signal peptide; sequence MAKIPLILSFCLLEAFLGA. Positions 20–39 are excised as a propeptide; that stretch reads ESTVFIENKEASTVLSRTRR. A Gla domain is found at 40-85; sequence GNSNRLEELIPGNLERECIEEKCSFEEAREVFENTEKTMEFWKIYI. Asn41, Glu46, Glu47, Glu54, Glu56, Glu59, Glu60, Glu65, Glu66, and Glu69 together coordinate Ca(2+). A 4-carboxyglutamate mark is found at Glu46, Glu47, Glu54, Glu56, Glu59, Glu60, Glu65, Glu66, Glu69, Glu72, Glu75, and Glu79. Position 54 (Glu54) interacts with Mg(2+). Residues Cys57 and Cys62 are joined by a disulfide bond. A Mg(2+)-binding site is contributed by Glu59. Mg(2+) is bound at residue Glu65. Glu69 contacts Mg(2+). Ca(2+) is bound by residues Glu75, Glu79, Asp86, Gly87, and Gln89. Positions 75 and 79 each coordinate Mg(2+). One can recognise an EGF-like 1; calcium-binding domain in the interval 86 to 122; the sequence is DGDQCNSNPCKNGAVCKDGVSSYECMCPPGYGGRNCE. 10 disulfide bridges follow: Cys90/Cys101, Cys95/Cys110, Cys112/Cys121, Cys127/Cys138, Cys134/Cys148, Cys150/Cys163, Cys171/Cys345, Cys262/Cys278, Cys392/Cys406, and Cys417/Cys445. The O-linked (Glc...) serine glycan is linked to Ser92. Asp103 lines the Ca(2+) pocket. Asp103 carries the post-translational modification (3R)-3-hydroxyaspartate. At Ser107 the chain carries Phosphoserine. One can recognise an EGF-like 2 domain in the interval 123–164; the sequence is IDSTCATKNGGCEHFCRHDTPQKAVCSCASGYKLHEDGKSCK. A propeptide spans 186 to 235 (activation peptide); that stretch reads TENTIERWNITAHDEGDAHDEALDITEPPPPPTTSAAPAKIVPITKNDTR. The Peptidase S1 domain occupies 236 to 469; it reads VVGGYDSVKG…YVKWIRETTR (234 aa). Residue His277 is the Charge relay system of the active site. 4 residues coordinate Ca(2+): Glu291, Asn293, Glu296, and Glu301. Residue Asp325 is the Charge relay system of the active site. Ser421 (charge relay system) is an active-site residue.

This sequence belongs to the peptidase S1 family. Heterodimer of a light chain and a heavy chain; disulfide-linked. Post-translationally, activated by factor XIa, which excises the activation peptide. The propeptide can also be removed by snake venom protease. Activated by coagulation factor VIIa-tissue factor (F7-F3) complex in calcium-dependent manner. In terms of processing, the iron and 2-oxoglutarate dependent 3-hydroxylation of aspartate and asparagine is (R) stereospecific within EGF domains.

It localises to the secreted. The catalysed reaction is Selective cleavage of Arg-|-Ile bond in factor X to form factor Xa.. Its function is as follows. Factor IX is a vitamin K-dependent plasma protein that participates in the intrinsic pathway of blood coagulation by converting factor X to its active form in the presence of Ca(2+) ions, phospholipids, and factor VIIIa. This Gallus gallus (Chicken) protein is Coagulation factor IX (F9).